The following is a 480-amino-acid chain: Beta-amyrin 28-monooxygenase (480 aa).

Residues 3–23 form a helical membrane-spanning segment; sequence VFFLSLLLICVLSVSIRLYLL. Heme is bound at residue C427.

The protein belongs to the cytochrome P450 family. Requires heme as cofactor. As to expression, expressed in leaves, stems and fruit skin.

Its subcellular location is the membrane. The catalysed reaction is beta-amyrin + 3 reduced [NADPH--hemoprotein reductase] + 3 O2 = oleanolate + 3 oxidized [NADPH--hemoprotein reductase] + 4 H2O + 4 H(+). In terms of biological role, catalyzes the carboxylation of beta-amyrin at the C-28 position to form oleanolic acid. May be involved in saponin biosynthesis in fruit skin. The sequence is that of Beta-amyrin 28-monooxygenase from Vitis vinifera (Grape).